The following is a 135-amino-acid chain: Large ribosomal subunit protein uL16c (135 aa).

Belongs to the universal ribosomal protein uL16 family. Part of the 50S ribosomal subunit.

The protein resides in the plastid. Its subcellular location is the chloroplast. The protein is Large ribosomal subunit protein uL16c of Panax ginseng (Korean ginseng).